A 97-amino-acid chain; its full sequence is Putative septation protein SpoVG (97 aa).

Belongs to the SpoVG family.

Its function is as follows. Could be involved in septation. In Borrelia garinii subsp. bavariensis (strain ATCC BAA-2496 / DSM 23469 / PBi) (Borreliella bavariensis), this protein is Putative septation protein SpoVG.